A 352-amino-acid chain; its full sequence is Protein CIA1 (352 aa).

7 WD repeats span residues 18 to 64, 72 to 111, 116 to 155, 161 to 200, 211 to 250, 265 to 303, and 315 to 352; these read GHTD…RSWT, THTR…FECI, GHEN…EYDC, GHTQ…GEYQ, GHSS…MQSG, YHDR…SVDG, and AHEN…ATKP.

This sequence belongs to the WD repeat CIA1 family. As to quaternary structure, part of a complex composed of AE7, CIA1, MMS19 and NAR1. Interacts with AE7 and NAR1.

The protein localises to the nucleus. It localises to the cytoplasm. Essential component of the cytosolic iron-sulfur (Fe-S) protein assembly (CIA) machinery. Required for the maturation of extramitochondrial Fe/S proteins. The chain is Protein CIA1 from Arabidopsis thaliana (Mouse-ear cress).